A 415-amino-acid chain; its full sequence is Probable N-acetyl-gamma-glutamyl-phosphate reductase, chloroplastic (415 aa).

A chloroplast-targeting transit peptide spans 1–74 (MGSTALGGGA…SGVKSGEEVR (74 aa)). The interval 48–68 (VRASVASSPQKQHSPKTSGVK) is disordered. A compositionally biased stretch (polar residues) spans 56–67 (PQKQHSPKTSGV). Residue C219 is part of the active site.

This sequence belongs to the NAGSA dehydrogenase family. Type 1 subfamily. As to quaternary structure, homotetramer.

Its subcellular location is the plastid. It is found in the chloroplast. It catalyses the reaction N-acetyl-L-glutamate 5-semialdehyde + phosphate + NADP(+) = N-acetyl-L-glutamyl 5-phosphate + NADPH + H(+). Its pathway is amino-acid biosynthesis; L-arginine biosynthesis; N(2)-acetyl-L-ornithine from L-glutamate: step 3/4. This chain is Probable N-acetyl-gamma-glutamyl-phosphate reductase, chloroplastic, found in Oryza sativa subsp. japonica (Rice).